Consider the following 254-residue polypeptide: Dihydroanticapsin 7-dehydrogenase (254 aa).

Residue 9-31 (LITGGASGIGYAAVQAFLNQQAN) coordinates NAD(+). Ser-139 is a binding site for substrate. Tyr-152 (proton acceptor) is an active-site residue.

This sequence belongs to the short-chain dehydrogenases/reductases (SDR) family.

The catalysed reaction is L-dihydroanticapsin + NAD(+) = L-anticapsin + NADH + H(+). It functions in the pathway antibiotic biosynthesis; bacilysin biosynthesis. In terms of biological role, part of the bacABCDEFG operon responsible for the biosynthesis of bacilysin, an irreversible inactivator of the glutaminase domain of glucosamine synthetase. Catalyzes the dehydrogenation of the C7-hydroxyl group in the 4S-tetrahydrotyrosine (4S-H4Tyr) to yield anticapsin (epoxycyclohexanonyl-Ala). This is Dihydroanticapsin 7-dehydrogenase from Bacillus amyloliquefaciens (Bacillus velezensis).